The following is a 353-amino-acid chain: Mitochondrial distribution and morphology protein 12 (353 aa).

Positions 1-330 (MSFDIKWENL…WPSWICLDMN (330 aa)) constitute an SMP-LTD domain. 3 stretches are compositionally biased toward acidic residues: residues 64 to 75 (DEFYEDTTDSPE), 84 to 103 (TGDD…DDDG), and 330 to 342 (NDDD…EENP). Disordered regions lie at residues 64–140 (DEFY…NRSR) and 330–353 (NDDD…HVGS).

This sequence belongs to the MDM12 family. As to quaternary structure, component of the ER-mitochondria encounter structure (ERMES) or MDM complex, composed of MMM1, MDM10, MDM12 and MDM34. An MMM1 homodimer associates with one molecule of MDM12 on each side in a pairwise head-to-tail manner, and the SMP-LTD domains of MMM1 and MDM12 generate a continuous hydrophobic tunnel for phospholipid trafficking.

It localises to the mitochondrion outer membrane. It is found in the endoplasmic reticulum membrane. Its function is as follows. Component of the ERMES/MDM complex, which serves as a molecular tether to connect the endoplasmic reticulum (ER) and mitochondria. Components of this complex are involved in the control of mitochondrial shape and protein biogenesis, and function in nonvesicular lipid trafficking between the ER and mitochondria. MDM12 is required for the interaction of the ER-resident membrane protein MMM1 and the outer mitochondrial membrane-resident beta-barrel protein MDM10. The MDM12-MMM1 subcomplex functions in the major beta-barrel assembly pathway that is responsible for biogenesis of all mitochondrial outer membrane beta-barrel proteins, and acts in a late step after the SAM complex. The MDM10-MDM12-MMM1 subcomplex further acts in the TOM40-specific pathway after the action of the MDM12-MMM1 complex. Essential for establishing and maintaining the structure of mitochondria and maintenance of mtDNA nucleoids. In Candida tropicalis (strain ATCC MYA-3404 / T1) (Yeast), this protein is Mitochondrial distribution and morphology protein 12.